The chain runs to 717 residues: UvrABC system protein C (717 aa).

In terms of domain architecture, GIY-YIG spans Asp-16–Val-95. One can recognise a UVR domain in the interval Asp-208–Ala-243. 2 disordered regions span residues Thr-517 to Arg-555 and His-696 to Gln-717. Basic and acidic residues-rich tracts occupy residues Glu-541–Arg-553 and Glu-707–Gln-717.

It belongs to the UvrC family. Interacts with UvrB in an incision complex.

Its subcellular location is the cytoplasm. The UvrABC repair system catalyzes the recognition and processing of DNA lesions. UvrC both incises the 5' and 3' sides of the lesion. The N-terminal half is responsible for the 3' incision and the C-terminal half is responsible for the 5' incision. This Saccharopolyspora erythraea (strain ATCC 11635 / DSM 40517 / JCM 4748 / NBRC 13426 / NCIMB 8594 / NRRL 2338) protein is UvrABC system protein C.